A 309-amino-acid polypeptide reads, in one-letter code: Aspartate carbamoyltransferase catalytic subunit (309 aa).

Residues arginine 55 and threonine 56 each coordinate carbamoyl phosphate. Position 85 (lysine 85) interacts with L-aspartate. Residues arginine 106, histidine 135, and glutamine 138 each contribute to the carbamoyl phosphate site. L-aspartate is bound by residues arginine 168 and arginine 230. Residues leucine 268 and proline 269 each contribute to the carbamoyl phosphate site.

The protein belongs to the aspartate/ornithine carbamoyltransferase superfamily. ATCase family. In terms of assembly, heterododecamer (2C3:3R2) of six catalytic PyrB chains organized as two trimers (C3), and six regulatory PyrI chains organized as three dimers (R2).

It carries out the reaction carbamoyl phosphate + L-aspartate = N-carbamoyl-L-aspartate + phosphate + H(+). Its pathway is pyrimidine metabolism; UMP biosynthesis via de novo pathway; (S)-dihydroorotate from bicarbonate: step 2/3. Catalyzes the condensation of carbamoyl phosphate and aspartate to form carbamoyl aspartate and inorganic phosphate, the committed step in the de novo pyrimidine nucleotide biosynthesis pathway. This Aliivibrio fischeri (strain ATCC 700601 / ES114) (Vibrio fischeri) protein is Aspartate carbamoyltransferase catalytic subunit.